Reading from the N-terminus, the 319-residue chain is GATA transcription factor 18 (319 aa).

The segment covering 1 to 15 (MPDAAAAAAAAQDAD) has biased composition (low complexity). A disordered region spans residues 1–74 (MPDAAAAAAA…AAPEPVSALL (74 aa)). Residues 31–60 (DNDDDDGDDGTEEDEEEDDDEEGDEEELPP) are compositionally biased toward acidic residues. The Tify domain occupies 74–109 (LPGSPNQLTLLFQGEVYVFESVTPEKVQAVLLLLGR). The CCT domain maps to 143–185 (RVASLIRFREKRKERNFDKKIRYAVRKEVALRMQRRKGQFAGR). The segment at 215-242 (CQNCGTSEKMTPAMRRGPAGPRTLCNAC) adopts a GATA-type zinc-finger fold. A disordered region spans residues 292–319 (ITASHGEVMGDSTPANEAEIGAPKAQSQ).

The protein belongs to the type IV zinc-finger family. Class C subfamily.

Its subcellular location is the nucleus. In terms of biological role, transcriptional activator that specifically binds 5'-GATA-3' or 5'-GAT-3' motifs within gene promoters. The sequence is that of GATA transcription factor 18 from Oryza sativa subsp. japonica (Rice).